The following is a 94-amino-acid chain: MVYISNGQVLDSRNQSPWRVSFLTDFFWGIAEFVVFFFKTLLQQDVKKRRGYGSSSDSRYDDGRGPPGNPPRRMGRISHLRGPSPPPMAGGUGR.

A helical membrane pass occupies residues Val20 to Leu42. The disordered stretch occupies residues Val46–Arg94. Residue Sec92 is a non-standard amino acid, selenocysteine.

The protein belongs to the selenoprotein K family. Interacts with DERL1, DERL2, DERL3 and SELENOS. The SELENOK-SELENOS complex interacts with VCP. Interacts with ZDHHC6. Post-translationally, cleaved by CAPN2/m-calpain in resting macrophages but not in activated macrophages. Macrophage activation up-regulates expression of the calpain inhibitor CAST/calpastatin, resulting in inhibition of CAPN2 activity. In terms of processing, truncated SELENOK proteins produced by failed UGA/Sec decoding are ubiquitinated by the CRL2(KLHDC2) complex, which recognizes the diglycine (Gly-Gly) at the C-terminus of truncated SELENOK proteins. High expression in spleen and intestine (at protein level). Expressed in a range of immune cells including T and B-cells and also in myeloid cells including macrophages, neutrophils and dendritic cells (at protein level).

Its subcellular location is the endoplasmic reticulum membrane. It is found in the cell membrane. Functionally, required for Ca(2+) flux in immune cells and plays a role in T-cell proliferation and in T-cell and neutrophil migration. Involved in endoplasmic reticulum-associated degradation (ERAD) of soluble glycosylated proteins. Required for palmitoylation and cell surface expression of CD36 and involved in macrophage uptake of low-density lipoprotein and in foam cell formation. Together with ZDHHC6, required for palmitoylation of ITPR1 in immune cells, leading to regulate ITPR1 stability and function. Plays a role in protection of cells from ER stress-induced apoptosis. Protects cells from oxidative stress when overexpressed in cardiomyocytes. The protein is Selenoprotein K of Mus musculus (Mouse).